The chain runs to 804 residues: Pentatricopeptide repeat-containing protein At4g35130, chloroplastic (804 aa).

A chloroplast-targeting transit peptide spans 1-19 (MAATLLSQCYRIYNSDACK). PPR repeat units lie at residues 63-93 (NDPA…MNKA), 94-128 (DAFL…GVKA), 129-163 (DTFT…GFVS), 164-194 (DVYV…MPER), 195-229 (DIVS…GFKP), 230-264 (DRFS…RIET), 266-296 (DVMV…MIQR), 297-332 (NIVA…GLQP), 333-363 (DVIT…GFLP), 364-394 (HMVL…MAEK), 395-429 (NVIS…SLVP), 430-464 (DSTT…RYWS), 465-495 (NTII…ILLK), 496-530 (DVVS…RVNP), 531-561 (NKST…MKRE), and 567-597 (GIEH…MPFV). Residues 602-677 (IWGSLLNASR…TSSRSTVEAK (76 aa)) form a type E motif region. The segment at 678 to 708 (GKSHVFTNGDRSHVATNKIYEVLDVVSRMVG) is type E(+) motif. A type DYW motif region spans residues 710–804 (EDIYVHCVSR…NGRCSCGNYW (95 aa)).

It belongs to the PPR family. PCMP-H subfamily.

It localises to the plastid. It is found in the chloroplast. In Arabidopsis thaliana (Mouse-ear cress), this protein is Pentatricopeptide repeat-containing protein At4g35130, chloroplastic (PCMP-H27).